The sequence spans 353 residues: DNA-directed RNA polymerase subunit alpha (353 aa).

Residues 1–245 form an alpha N-terminal domain (alpha-NTD) region; it reads MEKIQKITYK…AHFQIIGNIN (245 aa). The tract at residues 261–353 is alpha C-terminal domain (alpha-CTD); that stretch reads EREIKSTTPI…QLNNSEEGEE (93 aa).

Belongs to the RNA polymerase alpha chain family. Homodimer. The RNAP catalytic core consists of 2 alpha, 1 beta, 1 beta' and 1 omega subunit. When a sigma factor is associated with the core the holoenzyme is formed, which can initiate transcription.

The catalysed reaction is RNA(n) + a ribonucleoside 5'-triphosphate = RNA(n+1) + diphosphate. DNA-dependent RNA polymerase catalyzes the transcription of DNA into RNA using the four ribonucleoside triphosphates as substrates. This is DNA-directed RNA polymerase subunit alpha from Mycoplasma sp.